The chain runs to 144 residues: Probable low molecular weight protein-tyrosine-phosphatase AmsI (144 aa).

C9 serves as the catalytic Nucleophile. R15 is a catalytic residue. D115 functions as the Proton donor in the catalytic mechanism.

The protein belongs to the low molecular weight phosphotyrosine protein phosphatase family.

The catalysed reaction is O-phospho-L-tyrosyl-[protein] + H2O = L-tyrosyl-[protein] + phosphate. Its function is as follows. May function as a phosphatase required for amylovoran (an exopolysaccharide that functions as a virulence factor) production. This Erwinia amylovora (Fire blight bacteria) protein is Probable low molecular weight protein-tyrosine-phosphatase AmsI (amsI).